Here is a 925-residue protein sequence, read N- to C-terminus: Nonribosomal peptide synthetase apvA (925 aa).

The interval 15–436 (AREDSGHVVV…TGRAKENMII (422 aa)) is adenylation (A) domain. The Carrier domain occupies 564-644 (EPQNDLEKTL…DLATALEKLQ (81 aa)). Ser-601 carries the O-(pantetheine 4'-phosphoryl)serine modification. Positions 663–909 (PLWLVHPGAG…HYSMIGPDHV (247 aa)) are thioesterase (TE) domain.

It belongs to the NRP synthetase family. As to expression, apvA specifically produces aspulvinone E in hyphea, in contrast to melA which produces aspulvinone E in conidia where it is converted to UV-protective Asp-melanin.

The enzyme catalyses 2 3-(4-hydroxyphenyl)pyruvate + AH2 + 2 ATP + O2 = aspulvinone E + A + 2 AMP + CO2 + 2 diphosphate + H2O + H(+). It participates in secondary metabolite biosynthesis. Nonribosomal peptide synthetase; part of the gene cluster that mediates the biosynthesis of aspulvinones. The nonribosomal peptide synthetase apvA is responsible for the production of aspulvinone E, the core structure of aspulvinones. ApvA first activates 4-hydroxyphenylpyruvate (HPPA) through its A domain to AMP-HPPA. The HPPA unit is then loaded to the T domain and eventually transferred to the TE domain. Upon loading of another HPPA unit to the T domain, the TE domain promotes the enolate formation on the unit attached. The next step involves head to tail Claisen condensation, followed by the keto-enol tautermerization and a nucleophilic attack on the carbonyl carbon to yield the furanone partial structure. A spontaneous oxidation at the beta-carbon of the thioester might occur in aerobic condition. The TE domain then catalyzes the hydrolysis of the thioester, followed by spontaneous decarboxylation, dehydroxylation and keto-enol tautermerization to give the aspulvinone core. Aspulvinone E is highly unstable and converted to isoaspulvinone E in the presence of light. The structural diversity of the aspulvinones suggests that other tailoring enzymes are involved and have still to be identified. The protein is Nonribosomal peptide synthetase apvA of Aspergillus terreus (strain NIH 2624 / FGSC A1156).